A 274-amino-acid polypeptide reads, in one-letter code: Cytochrome c oxidase subunit 3 (274 aa).

The next 7 membrane-spanning stretches (helical) occupy residues 22 to 42 (PSPW…GGVM), 47 to 67 (FAAG…SMLL), 93 to 113 (GVVL…WAFF), 137 to 157 (PFEV…TITV), 170 to 190 (TILY…LQWV), 208 to 228 (FFVA…FLTV), and 248 to 268 (AAIW…VSVY).

Belongs to the cytochrome c oxidase subunit 3 family. Component of the cytochrome c oxidase (complex IV, CIV), a multisubunit enzyme composed of a catalytic core of 3 subunits and several supernumerary subunits. The complex exists as a monomer or a dimer and forms supercomplexes (SCs) in the inner mitochondrial membrane with ubiquinol-cytochrome c oxidoreductase (cytochrome b-c1 complex, complex III, CIII).

The protein resides in the mitochondrion inner membrane. The enzyme catalyses 4 Fe(II)-[cytochrome c] + O2 + 8 H(+)(in) = 4 Fe(III)-[cytochrome c] + 2 H2O + 4 H(+)(out). In terms of biological role, component of the cytochrome c oxidase, the last enzyme in the mitochondrial electron transport chain which drives oxidative phosphorylation. The respiratory chain contains 3 multisubunit complexes succinate dehydrogenase (complex II, CII), ubiquinol-cytochrome c oxidoreductase (cytochrome b-c1 complex, complex III, CIII) and cytochrome c oxidase (complex IV, CIV), that cooperate to transfer electrons derived from NADH and succinate to molecular oxygen, creating an electrochemical gradient over the inner membrane that drives transmembrane transport and the ATP synthase. Cytochrome c oxidase is the component of the respiratory chain that catalyzes the reduction of oxygen to water. Electrons originating from reduced cytochrome c in the intermembrane space (IMS) are transferred via the dinuclear copper A center (CU(A)) of subunit 2 and heme A of subunit 1 to the active site in subunit 1, a binuclear center (BNC) formed by heme A3 and copper B (CU(B)). The BNC reduces molecular oxygen to 2 water molecules using 4 electrons from cytochrome c in the IMS and 4 protons from the mitochondrial matrix. In Allomyces macrogynus, this protein is Cytochrome c oxidase subunit 3 (COX3).